Here is a 206-residue protein sequence, read N- to C-terminus: Elongation factor 1-beta (206 aa).

Ala-2 bears the N-acetylalanine mark. Residue Lys-13 forms a Glycyl lysine isopeptide (Lys-Gly) (interchain with G-Cter in ubiquitin) linkage. Residues Ser-31 and Ser-86 each carry the phosphoserine modification.

The protein belongs to the EF-1-beta/EF-1-delta family. As to quaternary structure, the eukaryotic elongation factor 1 complex (eEF1) is probably a heterohexamer. Two trimeric complexes, each composed of eEF1A (TEF1 or TEF2), eEF1Balpha (EFB1) and eEF1Bgamma (CAM1 or TEF4), are probably dimerized via the eF1Bgamma subunits. eEF1Balpha interacts directly with eEF1A. eEF1Balpha and eEF1Bgamma form the eEF1B subcomplex with the GEF activity. S-thiolated in response to oxidative stress, probably inhibiting the protein and causing a reduction in protein synthesis.

It functions in the pathway protein biosynthesis; polypeptide chain elongation. Functionally, catalytic subunit of the guanine nucleotide exchange factor (GEF) (eEF1B subcomplex) of the eukaryotic elongation factor 1 complex (eEF1). Stimulates the exchange of GDP for GTP on elongation factor 1A (eEF1A), probably by displacing GDP from the nucleotide binding pocket in eEF1A. The 30-fold higher concentration of GTP compared to GDP in cells favors the formation of eEF1A-GTP, which rapidly forms a ternary complex with aminoacyl-tRNA that in turn displaces eEF1B from the complex. This chain is Elongation factor 1-beta (EFB1), found in Saccharomyces cerevisiae (strain ATCC 204508 / S288c) (Baker's yeast).